The primary structure comprises 1084 residues: Probable hemoglobin and hemoglobin-haptoglobin-binding protein 3 (1084 aa).

An N-terminal signal peptide occupies residues 1 to 24 (MTNFKFSLLACSIAFALNASTVYA). 12 repeat units span residues 26 to 29 (QPTN), 30 to 33 (QPTN), 34 to 37 (QPTN), 38 to 41 (QPTN), 42 to 45 (QPTN), 46 to 49 (QPTN), 50 to 53 (QPTN), 54 to 57 (QPTN), 58 to 61 (QPTN), 62 to 65 (QPTN), 66 to 69 (QPTN), and 70 to 73 (QPTN). The 12 X 4 AA tandem repeats of Q-P-T-N stretch occupies residues 26-73 (QPTNQPTNQPTNQPTNQPTNQPTNQPTNQPTNQPTNQPTNQPTNQPTN). Low complexity predominate over residues 26 to 75 (QPTNQPTNQPTNQPTNQPTNQPTNQPTNQPTNQPTNQPTNQPTNQPTNQN). The interval 26–77 (QPTNQPTNQPTNQPTNQPTNQPTNQPTNQPTNQPTNQPTNQPTNQPTNQNSN) is disordered. The TonB box signature appears at 83–90 (EQINVSGS). One can recognise a TBDR plug domain in the interval 95–220 (NIKEKKVGET…LGGSVIFETK (126 aa)). Positions 228–1084 (DKDYYLSYKR…NYRMSVQFEF (857 aa)) constitute a TBDR beta-barrel domain. Residues 1067 to 1084 (NRFYAPGRNYRMSVQFEF) carry the TonB C-terminal box motif.

The protein belongs to the TonB-dependent receptor family. Hemoglobin/haptoglobin binding protein subfamily.

It localises to the cell outer membrane. In terms of biological role, acts as a receptor for hemoglobin or the hemoglobin/haptoglobin complex of the human host and is required for heme uptake. This Haemophilus influenzae (strain ATCC 51907 / DSM 11121 / KW20 / Rd) protein is Probable hemoglobin and hemoglobin-haptoglobin-binding protein 3.